Consider the following 128-residue polypeptide: Fluoride-specific ion channel FluC (128 aa).

Helical transmembrane passes span I5 to G25, L35 to F55, L67 to V87, and F96 to L116. Residues G75 and T78 each contribute to the Na(+) site.

This sequence belongs to the fluoride channel Fluc/FEX (TC 1.A.43) family.

It is found in the cell inner membrane. It catalyses the reaction fluoride(in) = fluoride(out). With respect to regulation, na(+) is not transported, but it plays an essential structural role and its presence is essential for fluoride channel function. Functionally, fluoride-specific ion channel. Important for reducing fluoride concentration in the cell, thus reducing its toxicity. This Burkholderia thailandensis (strain ATCC 700388 / DSM 13276 / CCUG 48851 / CIP 106301 / E264) protein is Fluoride-specific ion channel FluC.